We begin with the raw amino-acid sequence, 811 residues long: Probable disease resistance protein At5g04720 (811 aa).

The RPW8 domain occupies 1–147; that stretch reads MADIIGGEVV…KVDSLNEKLG (147 aa). 2 consecutive NB-ARC domains span residues 180–242 and 312–437; these read VGLD…VSQS and TYDV…NVLV. An ATP-binding site is contributed by 207–214; it reads GMSGSGKT. LRR repeat units follow at residues 650–674, 676–699, 700–722, 724–746, and 748–769; these read FPKL…ICGI, SLNS…SKLK, ALQL…ICEL, RLKY…IGKV, and TLEK…VVLL.

Belongs to the disease resistance NB-LRR family.

In terms of biological role, probable disease resistance protein. The sequence is that of Probable disease resistance protein At5g04720 from Arabidopsis thaliana (Mouse-ear cress).